The sequence spans 913 residues: Transient receptor potential cation channel protein painless (913 aa).

Residues 1 to 490 lie on the Cytoplasmic side of the membrane; it reads MDFNNCGFID…SSFLFLKWHR (490 aa). ANK repeat units follow at residues 154–189, 260–289, and 368–397; these read GEFTPLHHVLRKSKVKAGKKELIQLFLDHPELDIDS, EYFGLLQESIKRGRQRAFDVILSTGMDINS, and GRLVPLFFAVKYRNTSAMQKLLKNGAYIGS. A helical transmembrane segment spans residues 491–511; the sequence is LSVIFYLNFLIYSLFTASIIT. Over 512–523 the chain is Extracellular; sequence YTLLKFHESDQR. The helical transmembrane segment at 524-544 threads the bilayer; it reads ALTAFFGLLSWLGISYLILRE. Topologically, residues 545-555 are cytoplasmic; the sequence is CIQWIMSPVRY. Residues 556–576 traverse the membrane as a helical segment; it reads FWSITNIMEVALITLSIFTCM. Topologically, residues 577–586 are extracellular; it reads ESSFDKETQR. Residues 587-607 traverse the membrane as a helical segment; it reads VLAVFTILLVSMEFCLLVGSL. Topologically, residues 608–628 are cytoplasmic; it reads PVLSISTHMLMLREVSNSFLK. Residues 629–649 form a helical membrane-spanning segment; the sequence is SFTLYSIFVLTFSLCFYILFG. The Extracellular portion of the chain corresponds to 650 to 708; it reads KSVEEDQSKSATPCPPLGKKEGKDEEQGFNTFTKPIEAVIKTIVMLTGEFDAGSIQFTS. The disordered stretch occupies residues 656 to 675; sequence QSKSATPCPPLGKKEGKDEE. Residues 709–729 form a helical membrane-spanning segment; it reads IYTYLIFLLFVIFMTIVLFNL. At 730–913 the chain is on the cytoplasmic side; that stretch reads LNGLAVSDTQ…QLIQLVQDRK (184 aa).

Belongs to the transient receptor (TC 1.A.4) family. In terms of tissue distribution, present in multidendritic neurons, chordotonal neurons, a subset of cells in the central nervous system and a subset of sensory neurons in the antennal-maxillary complex. Not detected in gonads and dorsal vessels (at protein level). Expressed in peripheral neurons that extend multiple branched dendrites beneath the larval epidermis, similar to vertebrate pain receptors.

The protein localises to the membrane. Its function is as follows. Receptor-activated non-selective cation channel involved in detection of pain sensation due to high temperature. Involved in heat nociception by being activated by noxious temperature of 38 degrees Celsius. In Drosophila melanogaster (Fruit fly), this protein is Transient receptor potential cation channel protein painless (pain).